The primary structure comprises 491 residues: Probable CtpA-like serine protease (491 aa).

The interval 1-22 (MSESKDTTEVNQEVNEKASSQS) is disordered. Residues 9–22 (EVNQEVNEKASSQS) show a composition bias toward polar residues. A helical transmembrane segment spans residues 34–54 (FIIILIVTILVTAMIAVFATI). Positions 119–201 (TKSFNEDVSG…TKVTLTIERG (83 aa)) constitute a PDZ domain. Catalysis depends on charge relay system residues serine 324, aspartate 335, and lysine 349.

This sequence belongs to the peptidase S41A family.

The protein resides in the cell membrane. The sequence is that of Probable CtpA-like serine protease from Staphylococcus saprophyticus subsp. saprophyticus (strain ATCC 15305 / DSM 20229 / NCIMB 8711 / NCTC 7292 / S-41).